The chain runs to 384 residues: V-type proton ATPase subunit C 2 (384 aa).

It belongs to the V-ATPase C subunit family. In terms of assembly, V-ATPase is a heteromultimeric enzyme made up of two complexes: the ATP-hydrolytic V1 complex and the proton translocation V0 complex. The V1 complex consists of three catalytic AB heterodimers that form a heterohexamer, three peripheral stalks each consisting of EG heterodimers, one central rotor including subunits D and F, and the regulatory subunits C and H. The proton translocation complex V0 consists of the proton transport subunit a, a ring of proteolipid subunits c9c'', rotary subunit d, subunits e and f, and the accessory subunits vah-19/Ac45 and vah-20/PRR.

In terms of biological role, subunit of the V1 complex of vacuolar(H+)-ATPase (V-ATPase), a multisubunit enzyme composed of a peripheral complex (V1) that hydrolyzes ATP and a membrane integral complex (V0) that translocates protons. V-ATPase is responsible for acidifying and maintaining the pH of intracellular compartments and in some cell types, is targeted to the plasma membrane, where it is responsible for acidifying the extracellular environment. Subunit C is necessary for the assembly of the catalytic sector of the enzyme and is likely to have a specific function in its catalytic activity. The chain is V-type proton ATPase subunit C 2 (VATC) from Ascidia sydneiensis samea (Vanadium-rich ascidian).